Consider the following 563-residue polypeptide: Cytochrome P450 monooxygenase efuG (563 aa).

A helical membrane pass occupies residues 10–30 (ITSHQWGIGSVFLLISIPLIV). The tract at residues 462–482 (PDDPQSGPRKDAKKQKAKSDG) is disordered. Cys-505 provides a ligand contact to heme.

This sequence belongs to the cytochrome P450 family. The cofactor is heme.

It localises to the membrane. Its pathway is secondary metabolite biosynthesis; terpenoid biosynthesis. Cytochrome P450 monooxygenase; part of the gene cluster that mediates the biosynthesis of enfumafungin, a glycosylated fernene-type triterpenoid with potent antifungal activity, mediated by its interaction with beta-1,3-glucan synthase and the fungal cell wall. The pathway begins with the terpene cyclase-glycosyl transferase fusion protein that most likely uses 2,3-oxidosqualene as substrate and catalyzes glycosylation immediately after cyclization. The fernene glycoside then could be processed by the desaturase efuI which catalyzes isomerization of a double bond established by efuA to form the core structure. The latter would then undergo a series of hydroxylations in unknown order at C-2, C-19, C-23 and C-25, which would be catalyzed by two of the three cytochrome P450 monooxygenases efuB, efuG or efuH. The hydroxy-group at C-25 becomes oxidized by the dehydrogenase efuE to enable a spontaneous, non-enzymatic hemiacetal formation with C-23. After hydroxylation at C-2, acetylation by the acetyltransferase efuC takes place. The final steps in enfumafungin biosynthesis require expansion of the 5-membered ring by lactonization via a Baeyer-Villiger reaction mediated by one of the BGC's cytochrome P450 monooxygenases (efuB, efuG or efuH) followed by ring cleavage. This type of reaction would establish a double bond between C-20 and C-21 which could be reduced by the reductase efuL to form the final product. The polypeptide is Cytochrome P450 monooxygenase efuG (Hormonema carpetanum).